Reading from the N-terminus, the 821-residue chain is Zinc finger protein 41 (821 aa).

Residues 1 to 55 (MAANGDSPPWSPALAAEGRGSSCEVRRERTPEARIHSVKRYPDLSPGPKGRSSAD) form a disordered region. The segment covering 24 to 35 (EVRRERTPEARI) has biased composition (basic and acidic residues). The 72-residue stretch at 69–140 (VSFEDVTVDF…EGEAPHQSCS (72 aa)) folds into the KRAB domain. Lys120 participates in a covalent cross-link: Glycyl lysine isopeptide (Lys-Gly) (interchain with G-Cter in SUMO2). Residues 313–335 (YVCTECVMGFTQKSHLFEHQRIH) form a C2H2-type 1 zinc finger. The segment at 341–364 (RECDKSNKVFPQKPQVDVHPSVYT) adopts a C2H2-type 2; degenerate zinc-finger fold. 10 consecutive C2H2-type zinc fingers follow at residues 369 to 391 (YLCTQCGKVFTLKSNLITHQKIH), 397 to 419 (YKCSECGKAFFQRSDLFRHLRIH), 425 to 447 (YECSECGKGFSQNSDLSIHQKTH), 453 to 475 (YECNECGKAFTRKSALRMHQRIH), 481 to 503 (YVCADCGKAFIQKSHFNTHQRIH), 509 to 531 (YECSDCGKSFTKKSQLHVHQRIH), 537 to 559 (YICTECGKVFTHRTNLTTHQKTH), 565 to 587 (YMCAECGKAFTDQSNLIKHQKTH), 593 to 615 (YKCNGCGKAFIWKSRLKIHQKSH), and 621 to 643 (YECKDCGKAFIQKSTLSVHQRIH). Lys647 is covalently cross-linked (Glycyl lysine isopeptide (Lys-Gly) (interchain with G-Cter in SUMO2)). 6 C2H2-type zinc fingers span residues 649–671 (YVCPECGKAFIQKSHFIAHHRIH), 677–699 (YECSDCGKCFTKKSQLRVHQKIH), 705–727 (NICAECGKAFTDRSNLITHQKIH), 733–755 (YECGDCGKTFTWKSRLNIHQKSH), 761–783 (YECSKCGKAFIQKATLSMHQIIH), and 789–811 (YACTECQKAFTDRSNLIKHQKMH).

The protein belongs to the krueppel C2H2-type zinc-finger protein family. Expressed in the heart, brain, placenta, lung, liver, skeletal muscle, kidney and pancreas.

It localises to the nucleus. In terms of biological role, may be involved in transcriptional regulation. The polypeptide is Zinc finger protein 41 (ZNF41) (Homo sapiens (Human)).